Reading from the N-terminus, the 512-residue chain is D-alanine--D-alanyl carrier protein ligase (512 aa).

152–153 (TS) provides a ligand contact to ATP. Position 199 (Asp199) interacts with D-alanine. 294-299 (NAYGPT) contacts ATP. Val303 provides a ligand contact to D-alanine. ATP-binding positions include Asp385, 397–400 (YGGR), and Lys499. Lys499 lines the D-alanine pocket.

It belongs to the ATP-dependent AMP-binding enzyme family. DltA subfamily.

It is found in the cytoplasm. The catalysed reaction is holo-[D-alanyl-carrier protein] + D-alanine + ATP = D-alanyl-[D-alanyl-carrier protein] + AMP + diphosphate. It functions in the pathway cell wall biogenesis; lipoteichoic acid biosynthesis. In terms of biological role, catalyzes the first step in the D-alanylation of lipoteichoic acid (LTA), the activation of D-alanine and its transfer onto the D-alanyl carrier protein (Dcp) DltC. In an ATP-dependent two-step reaction, forms a high energy D-alanyl-AMP intermediate, followed by transfer of the D-alanyl residue as a thiol ester to the phosphopantheinyl prosthetic group of the Dcp. D-alanylation of LTA plays an important role in modulating the properties of the cell wall in Gram-positive bacteria, influencing the net charge of the cell wall. In Streptococcus equi subsp. equi (strain 4047), this protein is D-alanine--D-alanyl carrier protein ligase.